The primary structure comprises 544 residues: Chaperonin GroEL 1 (544 aa).

ATP is bound by residues Thr-29–Pro-32, Asp-86–Thr-90, Gly-413, Asn-482–Leu-484, and Asp-498.

Belongs to the chaperonin (HSP60) family. In terms of assembly, forms a cylinder of 14 subunits composed of two heptameric rings stacked back-to-back. Interacts with the co-chaperonin GroES.

Its subcellular location is the cytoplasm. It catalyses the reaction ATP + H2O + a folded polypeptide = ADP + phosphate + an unfolded polypeptide.. Together with its co-chaperonin GroES, plays an essential role in assisting protein folding. The GroEL-GroES system forms a nano-cage that allows encapsulation of the non-native substrate proteins and provides a physical environment optimized to promote and accelerate protein folding. This chain is Chaperonin GroEL 1, found in Chloroflexus aurantiacus (strain ATCC 29366 / DSM 635 / J-10-fl).